The primary structure comprises 70 residues: Virion membrane protein OPG139 (70 aa).

Residues Met1 to Ser21 form a helical membrane-spanning segment. Residues Met22 to Val70 are Virion surface-facing. A disordered region spans residues Gln30–Phe50. Positions Asn33–Pro45 are enriched in pro residues. At Ser40 the chain carries Phosphoserine; by host.

This sequence belongs to the orthopoxvirus OPG139 family. In terms of processing, phosphorylated by a OPG054-independent mechanism.

The protein resides in the virion membrane. In terms of biological role, essential for the encapsidation of DNA into immature virions (IV) and the subsequent maturation of IV into mature virions (MV). This is Virion membrane protein OPG139 (OPG139) from Homo sapiens (Human).